The following is a 325-amino-acid chain: Pectinesterase A (325 aa).

Residues 1–18 form the signal peptide; the sequence is MRVQSYLSLFSLVGAALC. A glycan (N-linked (GlcNAc...) asparagine) is linked at asparagine 126. Position 143 (glutamine 143) interacts with substrate. The active-site Proton donor is the aspartate 166. Catalysis depends on aspartate 187, which acts as the Nucleophile. The substrate site is built by arginine 247 and tryptophan 249.

It belongs to the pectinesterase family.

Its subcellular location is the secreted. It catalyses the reaction [(1-&gt;4)-alpha-D-galacturonosyl methyl ester](n) + n H2O = [(1-&gt;4)-alpha-D-galacturonosyl](n) + n methanol + n H(+). The protein operates within glycan metabolism; pectin degradation; 2-dehydro-3-deoxy-D-gluconate from pectin: step 1/5. Functionally, involved in maceration and soft-rotting of plant tissue. Active against citrus pectin. This chain is Pectinesterase A (pmeA), found in Emericella nidulans (strain FGSC A4 / ATCC 38163 / CBS 112.46 / NRRL 194 / M139) (Aspergillus nidulans).